The primary structure comprises 152 residues: Large ribosomal subunit protein uL13 (152 aa).

Belongs to the universal ribosomal protein uL13 family. Part of the 50S ribosomal subunit.

Functionally, this protein is one of the early assembly proteins of the 50S ribosomal subunit, although it is not seen to bind rRNA by itself. It is important during the early stages of 50S assembly. This chain is Large ribosomal subunit protein uL13, found in Wolbachia pipientis subsp. Culex pipiens (strain wPip).